A 264-amino-acid chain; its full sequence is Proteasome subunit beta type-4 (264 aa).

Met1 is modified (N-acetylmethionine). The propeptide occupies 1–45 (MEALLESRSGLWAGGPAPGQFYRIPPTPGSSVDPVSALYGSPITR). A Phosphotyrosine modification is found at Tyr102.

This sequence belongs to the peptidase T1B family. The 26S proteasome consists of a 20S proteasome core and two 19S regulatory subunits. The 20S proteasome core is a barrel-shaped complex made of 28 subunits that are arranged in four stacked rings. The two outer rings are each formed by seven alpha subunits, and the two inner rings are formed by seven beta subunits. The proteolytic activity is exerted by three beta-subunits PSMB5, PSMB6 and PSMB7. Forms a ternary complex with SMAD1 and OAZ1 before PSMB4 is incorporated into the 20S proteasome. Interacts with PRPF19.

It localises to the cytoplasm. The protein resides in the nucleus. Functionally, non-catalytic component of the 20S core proteasome complex involved in the proteolytic degradation of most intracellular proteins. This complex plays numerous essential roles within the cell by associating with different regulatory particles. Associated with two 19S regulatory particles, forms the 26S proteasome and thus participates in the ATP-dependent degradation of ubiquitinated proteins. The 26S proteasome plays a key role in the maintenance of protein homeostasis by removing misfolded or damaged proteins that could impair cellular functions, and by removing proteins whose functions are no longer required. Associated with the PA200 or PA28, the 20S proteasome mediates ubiquitin-independent protein degradation. This type of proteolysis is required in several pathways including spermatogenesis (20S-PA200 complex) or generation of a subset of MHC class I-presented antigenic peptides (20S-PA28 complex). SMAD1/OAZ1/PSMB4 complex mediates the degradation of the CREBBP/EP300 repressor SNIP1. This Bos taurus (Bovine) protein is Proteasome subunit beta type-4 (PSMB4).